The chain runs to 313 residues: Olfactory receptor 10Z1 (313 aa).

Over 1–25 the chain is Extracellular; that stretch reads MGQTNVTSWRDFVFLGFSSSGELQL. Asn-5 carries N-linked (GlcNAc...) asparagine glycosylation. A helical membrane pass occupies residues 26–46; sequence LLFALFLSLYLVTLTSNVFII. The Cytoplasmic segment spans residues 47–54; sequence IAIRLDSH. Residues 55–75 form a helical membrane-spanning segment; the sequence is LHTPMYLFLSFLSFSETCYTL. Over 76–99 the chain is Extracellular; that stretch reads GIIPRMLSGLAGGDQAISYVGCAA. Residues Cys-97 and Cys-189 are joined by a disulfide bond. A helical transmembrane segment spans residues 100-120; it reads QMFFSASWACTNCFLLAAMGF. The Cytoplasmic portion of the chain corresponds to 121 to 139; the sequence is DRYVAICAPLHYASHMNPT. The chain crosses the membrane as a helical span at residues 140–160; sequence LCAQLVITSFLTGYLFGLGMT. The Extracellular portion of the chain corresponds to 161–197; it reads LVIFHLSFCSSHEIQHFFCDTPPVLSLACGDTGPSEL. The chain crosses the membrane as a helical span at residues 198–217; sequence RIFILSLLVLLVSFFFITIS. Residues 218-237 lie on the Cytoplasmic side of the membrane; that stretch reads YAYILAAILRIPSAEGQKKA. The chain crosses the membrane as a helical span at residues 238–258; sequence FSTCASHLTVVIIHYGCASFV. The Extracellular portion of the chain corresponds to 259 to 271; it reads YLRPKASYSLERD. Residues 272–292 traverse the membrane as a helical segment; it reads QLIAMTYTVVTPLLNPIVYSL. The Cytoplasmic segment spans residues 293 to 313; it reads RNRAIQTALRNAFRGRLLGKG.

Belongs to the G-protein coupled receptor 1 family.

The protein localises to the cell membrane. Functionally, odorant receptor. The chain is Olfactory receptor 10Z1 (OR10Z1) from Homo sapiens (Human).